The chain runs to 224 residues: Deoxyribose-phosphate aldolase (224 aa).

The active-site Proton donor/acceptor is aspartate 94. Lysine 158 acts as the Schiff-base intermediate with acetaldehyde in catalysis. The active-site Proton donor/acceptor is the lysine 187.

Belongs to the DeoC/FbaB aldolase family. DeoC type 1 subfamily. In terms of assembly, homodimer.

It is found in the cytoplasm. The enzyme catalyses 2-deoxy-D-ribose 5-phosphate = D-glyceraldehyde 3-phosphate + acetaldehyde. With respect to regulation, activated by citrate. Inhibited by NaBH(4). Activity is independent of divalent metal cations. Catalyzes a reversible aldol reaction between acetaldehyde and D-glyceraldehyde 3-phosphate to generate 2-deoxy-D-ribose 5-phosphate. Could be involved in pentose biosynthesis. The polypeptide is Deoxyribose-phosphate aldolase (Thermococcus kodakarensis (strain ATCC BAA-918 / JCM 12380 / KOD1) (Pyrococcus kodakaraensis (strain KOD1))).